Reading from the N-terminus, the 373-residue chain is Dual-specificity RNA methyltransferase RlmN (373 aa).

Catalysis depends on E94, which acts as the Proton acceptor. Positions 100–339 (EDDRATLCVS…VIVRKTRGDD (240 aa)) constitute a Radical SAM core domain. The cysteines at positions 107 and 344 are disulfide-linked. C114, C118, and C121 together coordinate [4Fe-4S] cluster. S-adenosyl-L-methionine contacts are provided by residues 168–169 (GE), S200, 222–224 (SIH), and N301. The active-site S-methylcysteine intermediate is the C344.

It belongs to the radical SAM superfamily. RlmN family. The cofactor is [4Fe-4S] cluster.

It localises to the cytoplasm. It carries out the reaction adenosine(2503) in 23S rRNA + 2 reduced [2Fe-2S]-[ferredoxin] + 2 S-adenosyl-L-methionine = 2-methyladenosine(2503) in 23S rRNA + 5'-deoxyadenosine + L-methionine + 2 oxidized [2Fe-2S]-[ferredoxin] + S-adenosyl-L-homocysteine. The catalysed reaction is adenosine(37) in tRNA + 2 reduced [2Fe-2S]-[ferredoxin] + 2 S-adenosyl-L-methionine = 2-methyladenosine(37) in tRNA + 5'-deoxyadenosine + L-methionine + 2 oxidized [2Fe-2S]-[ferredoxin] + S-adenosyl-L-homocysteine. Specifically methylates position 2 of adenine 2503 in 23S rRNA and position 2 of adenine 37 in tRNAs. m2A2503 modification seems to play a crucial role in the proofreading step occurring at the peptidyl transferase center and thus would serve to optimize ribosomal fidelity. This is Dual-specificity RNA methyltransferase RlmN from Shewanella baltica (strain OS185).